The primary structure comprises 375 residues: Phytanoyl-CoA hydroxylase-interacting protein-like (375 aa).

A phosphoserine mark is found at Ser11, Ser12, and Ser15. Asn22 carries N-linked (GlcNAc...) asparagine glycosylation. A Phosphoserine modification is found at Ser24. Residue Asn36 is glycosylated (N-linked (GlcNAc...) asparagine). The region spanning 51–160 is the Fibronectin type-III domain; sequence VPHNIKINNI…EIIEFCTADY (110 aa).

Belongs to the PHYHIP family.

Its function is as follows. May play a role in the development of the central system. This chain is Phytanoyl-CoA hydroxylase-interacting protein-like (Phyhipl), found in Rattus norvegicus (Rat).